The following is a 278-amino-acid chain: Large ribosomal subunit protein uL2 (278 aa).

2 disordered regions span residues 1–58 and 225–278; these read MAIR…GGGH and VMNP…KNKR. Residues 37–58 show a composition bias toward basic residues; the sequence is LHGRGGRNAHGRITTRHKGGGH. Positions 253–267 are enriched in basic and acidic residues; sequence PEGRTRKNKASDKLI. A compositionally biased stretch (basic residues) spans 268–278; that stretch reads VRRRRTGKNKR.

It belongs to the universal ribosomal protein uL2 family. Part of the 50S ribosomal subunit. Forms a bridge to the 30S subunit in the 70S ribosome.

Functionally, one of the primary rRNA binding proteins. Required for association of the 30S and 50S subunits to form the 70S ribosome, for tRNA binding and peptide bond formation. It has been suggested to have peptidyltransferase activity; this is somewhat controversial. Makes several contacts with the 16S rRNA in the 70S ribosome. The polypeptide is Large ribosomal subunit protein uL2 (Rhodococcus opacus (strain B4)).